We begin with the raw amino-acid sequence, 136 residues long: Ribosome-binding factor A (136 aa).

Belongs to the RbfA family. As to quaternary structure, monomer. Binds 30S ribosomal subunits, but not 50S ribosomal subunits or 70S ribosomes.

The protein localises to the cytoplasm. Its function is as follows. One of several proteins that assist in the late maturation steps of the functional core of the 30S ribosomal subunit. Associates with free 30S ribosomal subunits (but not with 30S subunits that are part of 70S ribosomes or polysomes). Required for efficient processing of 16S rRNA. May interact with the 5'-terminal helix region of 16S rRNA. The polypeptide is Ribosome-binding factor A (Rhizobium etli (strain ATCC 51251 / DSM 11541 / JCM 21823 / NBRC 15573 / CFN 42)).